The chain runs to 451 residues: uncharacterized protein (451 aa).

Helical transmembrane passes span 13–33, 41–61, 97–117, 142–162, 174–194, 217–237, 255–275, 299–319, 345–365, 381–401, and 429–449; these read IGFV…WKFP, GGAF…PLLV, ACFL…LYIV, NPVQ…LVVA, AVMM…SLTL, ILFA…VMVT, IVLM…PAVF, LPFG…AALT, WTSG…YGVL, FTVS…FIPL, and LLRF…IGIL.

The protein belongs to the sodium:neurotransmitter symporter (SNF) (TC 2.A.22) family.

The protein localises to the cell membrane. Functionally, putative sodium-dependent transporter. This is an uncharacterized protein from Bacillus subtilis (strain 168).